Reading from the N-terminus, the 136-residue chain is Large ribosomal subunit protein uL13 (136 aa).

This sequence belongs to the universal ribosomal protein uL13 family. Part of the 50S ribosomal subunit.

Its function is as follows. This protein is one of the early assembly proteins of the 50S ribosomal subunit, although it is not seen to bind rRNA by itself. It is important during the early stages of 50S assembly. This is Large ribosomal subunit protein uL13 from Thermoplasma acidophilum (strain ATCC 25905 / DSM 1728 / JCM 9062 / NBRC 15155 / AMRC-C165).